The chain runs to 150 residues: Phosphoribosyl-AMP cyclohydrolase (150 aa).

Asp93 is a binding site for Mg(2+). Residue Cys94 coordinates Zn(2+). Mg(2+)-binding residues include Asp95 and Asp97. Residues Cys112 and Cys119 each contribute to the Zn(2+) site.

This sequence belongs to the PRA-CH family. In terms of assembly, homodimer. Requires Mg(2+) as cofactor. The cofactor is Zn(2+).

It localises to the cytoplasm. It catalyses the reaction 1-(5-phospho-beta-D-ribosyl)-5'-AMP + H2O = 1-(5-phospho-beta-D-ribosyl)-5-[(5-phospho-beta-D-ribosylamino)methylideneamino]imidazole-4-carboxamide. It functions in the pathway amino-acid biosynthesis; L-histidine biosynthesis; L-histidine from 5-phospho-alpha-D-ribose 1-diphosphate: step 3/9. Functionally, catalyzes the hydrolysis of the adenine ring of phosphoribosyl-AMP. This Rhizobium etli (strain ATCC 51251 / DSM 11541 / JCM 21823 / NBRC 15573 / CFN 42) protein is Phosphoribosyl-AMP cyclohydrolase.